The following is a 441-amino-acid chain: MISQSYRILSRISRNNELKKTFLTNLNCKSSSPSIIRSFCKKQNLDENFEYTNKLEVQELKHYIPCYTIMDQEGVVSKPDQDPNFSKEEVIKMYTTMLTLNVMDSILYDVQRQGRISFYMTSFGEEAIHIGSAAALEMSDTIFAQYRETGVFMWRGFTINDIINQCCTNEHDLGKGRQMPMHFGSRKINLQTISSPLTTQLPQAVGSSYAQKLAGEKNCTIVYFGEGAASEGDFHAAMNFAAALSTPTIFFCRNNKWAISTPSKEQYKGDGIAGRGPNGYGMKTIRVDGNDIWAVYNVTKLARKIAVEEQVPVLIEAMTYRVGHHSTSDDSSRYRTVEEINAWKEGKNPISRLRNYMNHKGWWSDAQEKETIANARTTVRESLVNAEKQYKPSINEIFTDVYDKPTPNLIEQQKELIEHLKLYPDEYPLNQFADSKLILKD.

Residues Met1 to Glu17 constitute a mitochondrion transit peptide. Thiamine diphosphate is bound at residue Gln145–Arg147. 3 residues coordinate K(+): Ser194, Thr199, and Gln200.

Belongs to the BCKDHA family. Heterotetramer of alpha and beta chains. It depends on thiamine diphosphate as a cofactor.

The protein resides in the mitochondrion matrix. It carries out the reaction N(6)-[(R)-lipoyl]-L-lysyl-[protein] + 3-methyl-2-oxobutanoate + H(+) = N(6)-[(R)-S(8)-2-methylpropanoyldihydrolipoyl]-L-lysyl-[protein] + CO2. Its function is as follows. The branched-chain alpha-keto dehydrogenase complex catalyzes the overall conversion of alpha-keto acids to acyl-CoA and CO(2). It contains multiple copies of three enzymatic components: branched-chain alpha-keto acid decarboxylase (E1), lipoamide acyltransferase (E2) and lipoamide dehydrogenase (E3). This Dictyostelium discoideum (Social amoeba) protein is 2-oxoisovalerate dehydrogenase subunit alpha, mitochondrial (bkdA).